Here is a 360-residue protein sequence, read N- to C-terminus: Isopentenyl-diphosphate delta-isomerase (360 aa).

A substrate-binding site is contributed by 12-13 (RK). Residues Ser70, 71 to 73 (SMT), Ser101, and Asn130 contribute to the FMN site. Substrate is bound at residue 101–103 (SMR). Gln165 is a substrate binding site. Glu166 is a Mg(2+) binding site. FMN is bound by residues Lys197, 288 to 290 (GIR), and 309 to 310 (AG).

The protein belongs to the IPP isomerase type 2 family. Homooctamer. Dimer of tetramers. FMN serves as cofactor. Requires NADPH as cofactor. It depends on Mg(2+) as a cofactor.

It localises to the cytoplasm. The catalysed reaction is isopentenyl diphosphate = dimethylallyl diphosphate. Functionally, involved in the biosynthesis of isoprenoids. Catalyzes the 1,3-allylic rearrangement of the homoallylic substrate isopentenyl (IPP) to its allylic isomer, dimethylallyl diphosphate (DMAPP). The sequence is that of Isopentenyl-diphosphate delta-isomerase from Chlorobium limicola (strain DSM 245 / NBRC 103803 / 6330).